The chain runs to 159 residues: Regulator of G-protein signaling 13 (159 aa).

In terms of domain architecture, RGS spans 34-150 (SFENLMATKY…LKSEMYQKLL (117 aa)).

Functionally, inhibits signal transduction by increasing the GTPase activity of G protein alpha subunits thereby driving them into their inactive GDP-bound form. Binds to both G(i)-alpha and G(q)-alpha. The protein is Regulator of G-protein signaling 13 (RGS13) of Homo sapiens (Human).